A 289-amino-acid chain; its full sequence is ATP synthase gamma chain (289 aa).

It belongs to the ATPase gamma chain family. F-type ATPases have 2 components, CF(1) - the catalytic core - and CF(0) - the membrane proton channel. CF(1) has five subunits: alpha(3), beta(3), gamma(1), delta(1), epsilon(1). CF(0) has three main subunits: a, b and c.

Its subcellular location is the cell inner membrane. Functionally, produces ATP from ADP in the presence of a proton gradient across the membrane. The gamma chain is believed to be important in regulating ATPase activity and the flow of protons through the CF(0) complex. In Dichelobacter nodosus (strain VCS1703A), this protein is ATP synthase gamma chain.